Reading from the N-terminus, the 381-residue chain is tRNA pseudouridine synthase D (381 aa).

Residue Asp-81 is the Nucleophile of the active site. In terms of domain architecture, TRUD spans 160-335; it reads GMPNYFGSQR…TLGSRRFFWV (176 aa).

This sequence belongs to the pseudouridine synthase TruD family.

The enzyme catalyses uridine(13) in tRNA = pseudouridine(13) in tRNA. Functionally, responsible for synthesis of pseudouridine from uracil-13 in transfer RNAs. In Helicobacter acinonychis (strain Sheeba), this protein is tRNA pseudouridine synthase D.